We begin with the raw amino-acid sequence, 624 residues long: ADP,ATP carrier protein 1, chloroplastic (624 aa).

Residues 1-79 (MEAVIQTRGL…KERSTEFICK (79 aa)) constitute a chloroplast transit peptide. Ala-80 bears the N-acetylalanine mark. Helical transmembrane passes span 108 to 128 (VEVA…CILF), 182 to 202 (ALFY…GFVM), 240 to 260 (LFYV…FWGF), 315 to 335 (AMMS…WWVN), 446 to 466 (LLTG…APLV), and 545 to 565 (LANS…AWLA). Positions 579–624 (SEEELEKEMERASSVKIPVVSQDESGNGSLGESPSSSPEKSAPTNL) are disordered. Positions 602 to 624 (ESGNGSLGESPSSSPEKSAPTNL) are enriched in low complexity.

It belongs to the ADP/ATP translocase tlc (TC 2.A.12.2) family.

It localises to the plastid. Its subcellular location is the chloroplast membrane. Its function is as follows. May function as an ATP importer. The chain is ADP,ATP carrier protein 1, chloroplastic (AATP1) from Arabidopsis thaliana (Mouse-ear cress).